A 78-amino-acid polypeptide reads, in one-letter code: UPF0248 protein Msed_0897 (78 aa).

The protein belongs to the UPF0248 family.

In Metallosphaera sedula (strain ATCC 51363 / DSM 5348 / JCM 9185 / NBRC 15509 / TH2), this protein is UPF0248 protein Msed_0897.